A 338-amino-acid chain; its full sequence is Holliday junction branch migration complex subunit RuvB (338 aa).

The tract at residues 1–181 is large ATPase domain (RuvB-L); it reads MTRTITPSIT…FGVISRLEFY (181 aa). ATP contacts are provided by residues L20, R21, G62, K65, T66, T67, 128 to 130, R171, Y181, and R218; that span reads EDF. T66 is a Mg(2+) binding site. The interval 182 to 252 is small ATPAse domain (RuvB-S); the sequence is TDEELAFIIT…VVQDALALLE (71 aa). The head domain (RuvB-H) stretch occupies residues 255–338; sequence EMGFDQMDRM…VPEPPQGKLF (84 aa). DNA contacts are provided by R310 and R315.

The protein belongs to the RuvB family. Homohexamer. Forms an RuvA(8)-RuvB(12)-Holliday junction (HJ) complex. HJ DNA is sandwiched between 2 RuvA tetramers; dsDNA enters through RuvA and exits via RuvB. An RuvB hexamer assembles on each DNA strand where it exits the tetramer. Each RuvB hexamer is contacted by two RuvA subunits (via domain III) on 2 adjacent RuvB subunits; this complex drives branch migration. In the full resolvosome a probable DNA-RuvA(4)-RuvB(12)-RuvC(2) complex forms which resolves the HJ.

It is found in the cytoplasm. The enzyme catalyses ATP + H2O = ADP + phosphate + H(+). In terms of biological role, the RuvA-RuvB-RuvC complex processes Holliday junction (HJ) DNA during genetic recombination and DNA repair, while the RuvA-RuvB complex plays an important role in the rescue of blocked DNA replication forks via replication fork reversal (RFR). RuvA specifically binds to HJ cruciform DNA, conferring on it an open structure. The RuvB hexamer acts as an ATP-dependent pump, pulling dsDNA into and through the RuvAB complex. RuvB forms 2 homohexamers on either side of HJ DNA bound by 1 or 2 RuvA tetramers; 4 subunits per hexamer contact DNA at a time. Coordinated motions by a converter formed by DNA-disengaged RuvB subunits stimulates ATP hydrolysis and nucleotide exchange. Immobilization of the converter enables RuvB to convert the ATP-contained energy into a lever motion, pulling 2 nucleotides of DNA out of the RuvA tetramer per ATP hydrolyzed, thus driving DNA branch migration. The RuvB motors rotate together with the DNA substrate, which together with the progressing nucleotide cycle form the mechanistic basis for DNA recombination by continuous HJ branch migration. Branch migration allows RuvC to scan DNA until it finds its consensus sequence, where it cleaves and resolves cruciform DNA. The sequence is that of Holliday junction branch migration complex subunit RuvB from Geotalea uraniireducens (strain Rf4) (Geobacter uraniireducens).